Reading from the N-terminus, the 297-residue chain is HTH-type transcriptional regulator ArgP (297 aa).

In terms of domain architecture, HTH lysR-type spans 4-60; it reads PDYRTLQALDAVIRERGFERAAQKLCITQSAVSQRIKQLENMFGQPLLVRTVPPRPT. Positions 21 to 40 form a DNA-binding region, H-T-H motif; that stretch reads FERAAQKLCITQSAVSQRIK.

The protein belongs to the LysR transcriptional regulatory family. Homodimer.

Controls the transcription of genes involved in arginine and lysine metabolism. This is HTH-type transcriptional regulator ArgP from Citrobacter koseri (strain ATCC BAA-895 / CDC 4225-83 / SGSC4696).